The chain runs to 107 residues: Large ribosomal subunit protein uL24 (107 aa).

It belongs to the universal ribosomal protein uL24 family. In terms of assembly, part of the 50S ribosomal subunit.

Its function is as follows. One of two assembly initiator proteins, it binds directly to the 5'-end of the 23S rRNA, where it nucleates assembly of the 50S subunit. Functionally, one of the proteins that surrounds the polypeptide exit tunnel on the outside of the subunit. In Nitrosomonas eutropha (strain DSM 101675 / C91 / Nm57), this protein is Large ribosomal subunit protein uL24.